The following is a 131-amino-acid chain: Ribosome-binding factor A (131 aa).

Belongs to the RbfA family. In terms of assembly, monomer. Binds 30S ribosomal subunits, but not 50S ribosomal subunits or 70S ribosomes.

The protein resides in the cytoplasm. In terms of biological role, one of several proteins that assist in the late maturation steps of the functional core of the 30S ribosomal subunit. Associates with free 30S ribosomal subunits (but not with 30S subunits that are part of 70S ribosomes or polysomes). Required for efficient processing of 16S rRNA. May interact with the 5'-terminal helix region of 16S rRNA. This Thermotoga maritima (strain ATCC 43589 / DSM 3109 / JCM 10099 / NBRC 100826 / MSB8) protein is Ribosome-binding factor A.